Consider the following 283-residue polypeptide: Thymidylate synthase (283 aa).

Arginine 22 provides a ligand contact to dUMP. Catalysis depends on cysteine 160, which acts as the Nucleophile. DUMP-binding positions include arginine 180–aspartate 183, asparagine 191, and histidine 221–tyrosine 223. Aspartate 183 is a binding site for (6R)-5,10-methylene-5,6,7,8-tetrahydrofolate. Alanine 282 is a binding site for (6R)-5,10-methylene-5,6,7,8-tetrahydrofolate.

It belongs to the thymidylate synthase family. Bacterial-type ThyA subfamily. Homodimer.

It is found in the cytoplasm. It catalyses the reaction dUMP + (6R)-5,10-methylene-5,6,7,8-tetrahydrofolate = 7,8-dihydrofolate + dTMP. The protein operates within pyrimidine metabolism; dTTP biosynthesis. Catalyzes the reductive methylation of 2'-deoxyuridine-5'-monophosphate (dUMP) to 2'-deoxythymidine-5'-monophosphate (dTMP) while utilizing 5,10-methylenetetrahydrofolate (mTHF) as the methyl donor and reductant in the reaction, yielding dihydrofolate (DHF) as a by-product. This enzymatic reaction provides an intracellular de novo source of dTMP, an essential precursor for DNA biosynthesis. This chain is Thymidylate synthase, found in Shewanella frigidimarina (strain NCIMB 400).